An 826-amino-acid chain; its full sequence is Homeobox-leucine zipper protein HDG5 (826 aa).

Disordered stretches follow at residues 1-34 (MLTM…IQNP) and 69-119 (EMME…HRHT). Positions 23-34 (PSSSSPGTIQNP) are enriched in low complexity. Basic and acidic residues predominate over residues 88-105 (EDPKFGNESDVNELHDDE). Residues 110–119 (AKKKRYHRHT) show a composition bias toward basic residues. Positions 111-170 (KKKRYHRHTNRQIQEMEALFKENPHPDDKQRKRLSAELGLKPRQVKFWFQNRRTQMKAQQ) form a DNA-binding region, homeobox. Residues 165-189 (QMKAQQDRNENVMLRAENDNLKSEN) are a coiled coil. One can recognise an START domain in the interval 314–558 (ADEEKVIAME…LQRQCERIAS (245 aa)).

Belongs to the HD-ZIP homeobox family. Class IV subfamily. In terms of tissue distribution, expressed in shoot apical meristem (SAM) with higher levels in L1 cells and the epidermal layer of young leaves. Expressed in the L1 of apical inflorescence meristems, early flower primordia, carpel and stamen filament epidermis, ovule primordia, nucellus and chalaze.

The protein resides in the nucleus. Its function is as follows. Probable transcription factor. Involved, together with PDF2, in the regulation of flower organs development by promoting the expression of APETALA 3 (AP3) in the epidermis and internal cell layers of developing flowers. This is Homeobox-leucine zipper protein HDG5 from Arabidopsis thaliana (Mouse-ear cress).